The chain runs to 358 residues: Probable translocation protein Y4yK (358 aa).

The protein belongs to the FliN/MopA/SpaO family.

Functionally, could be involved in the secretion of an unknown factor. In Sinorhizobium fredii (strain NBRC 101917 / NGR234), this protein is Probable translocation protein Y4yK.